The sequence spans 178 residues: Interleukin-10 (178 aa).

The first 18 residues, 1–18 (MHSSALLCCLVLLTGVRA), serve as a signal peptide directing secretion. Cystine bridges form between Cys-30/Cys-126 and Cys-80/Cys-132. A glycan (N-linked (GlcNAc...) asparagine) is linked at Asn-134.

Belongs to the IL-10 family. As to quaternary structure, homodimer. Interacts with IL10RA and IL10RB.

It is found in the secreted. In terms of biological role, major immune regulatory cytokine that acts on many cells of the immune system where it has profound anti-inflammatory functions, limiting excessive tissue disruption caused by inflammation. Mechanistically, IL10 binds to its heterotetrameric receptor comprising IL10RA and IL10RB leading to JAK1 and STAT2-mediated phosphorylation of STAT3. In turn, STAT3 translocates to the nucleus where it drives expression of anti-inflammatory mediators. Targets antigen-presenting cells (APCs) such as macrophages and monocytes and inhibits their release of pro-inflammatory cytokines including granulocyte-macrophage colony-stimulating factor /GM-CSF, granulocyte colony-stimulating factor/G-CSF, IL-1 alpha, IL-1 beta, IL-6, IL-8 and TNF-alpha. Also interferes with antigen presentation by reducing the expression of MHC-class II and co-stimulatory molecules, thereby inhibiting their ability to induce T cell activation. In addition, controls the inflammatory response of macrophages by reprogramming essential metabolic pathways including mTOR signaling. The protein is Interleukin-10 (IL10) of Pan troglodytes (Chimpanzee).